The sequence spans 93 residues: uncharacterized protein (93 aa).

The interval 35–72 is disordered; sequence KSVPPPTPPKPVKKTPSPTLPKPSKQKQEPQVEVNEDR. The span at 60–72 shows a compositional bias: basic and acidic residues; sequence QKQEPQVEVNEDR.

This is an uncharacterized protein from Ostreid herpesvirus 1 (isolate France) (OsHV-1).